The primary structure comprises 619 residues: Isocitrate dehydrogenase kinase/phosphatase (619 aa).

Residues 354–360 and lysine 375 contribute to the ATP site; that span reads APGIRGM. Aspartate 409 is a catalytic residue.

This sequence belongs to the AceK family.

Its subcellular location is the cytoplasm. It carries out the reaction L-seryl-[isocitrate dehydrogenase] + ATP = O-phospho-L-seryl-[isocitrate dehydrogenase] + ADP + H(+). Its function is as follows. Bifunctional enzyme which can phosphorylate or dephosphorylate isocitrate dehydrogenase (IDH) on a specific serine residue. This is a regulatory mechanism which enables bacteria to bypass the Krebs cycle via the glyoxylate shunt in response to the source of carbon. When bacteria are grown on glucose, IDH is fully active and unphosphorylated, but when grown on acetate or ethanol, the activity of IDH declines drastically concomitant with its phosphorylation. This is Isocitrate dehydrogenase kinase/phosphatase from Bordetella bronchiseptica (strain ATCC BAA-588 / NCTC 13252 / RB50) (Alcaligenes bronchisepticus).